The chain runs to 544 residues: ATP synthase subunit alpha (544 aa).

173–180 is a binding site for ATP; that stretch reads GDRQTGKT. The disordered stretch occupies residues 513-544; sequence GSDGQIIGGGEPESDGEDVDVEQEQIVRQKRG. Residues 524–535 show a composition bias toward acidic residues; that stretch reads PESDGEDVDVEQ.

The protein belongs to the ATPase alpha/beta chains family. F-type ATPases have 2 components, CF(1) - the catalytic core - and CF(0) - the membrane proton channel. CF(1) has five subunits: alpha(3), beta(3), gamma(1), delta(1), epsilon(1). CF(0) has three main subunits: a(1), b(2) and c(9-12). The alpha and beta chains form an alternating ring which encloses part of the gamma chain. CF(1) is attached to CF(0) by a central stalk formed by the gamma and epsilon chains, while a peripheral stalk is formed by the delta and b chains.

It localises to the cell membrane. It catalyses the reaction ATP + H2O + 4 H(+)(in) = ADP + phosphate + 5 H(+)(out). In terms of biological role, produces ATP from ADP in the presence of a proton gradient across the membrane. The alpha chain is a regulatory subunit. The polypeptide is ATP synthase subunit alpha (Beutenbergia cavernae (strain ATCC BAA-8 / DSM 12333 / CCUG 43141 / JCM 11478 / NBRC 16432 / NCIMB 13614 / HKI 0122)).